A 401-amino-acid chain; its full sequence is Patatin-like protein 4 (401 aa).

The PNPLA domain maps to 17 to 218; sequence LSLDGGGVRG…TANDPTLVGM (202 aa). The GXGXXG signature appears at 21-26; it reads GGGVRG. The GXSXG signature appears at 60–64; that stretch reads GTSTG. Ser-62 acts as the Nucleophile in catalysis. Catalysis depends on Asp-205, which acts as the Proton acceptor. Residues 205-207 carry the DGA/G motif; it reads DGG.

The protein belongs to the patatin family.

Functionally, possesses non-specific lipolytic acyl hydrolase (LAH) activity. Hydrolyzes phospholipids as well as galactolipids. May play a role in disease resistance. This Arabidopsis thaliana (Mouse-ear cress) protein is Patatin-like protein 4 (PLP4).